Reading from the N-terminus, the 531-residue chain is Sterol 26-hydroxylase, mitochondrial (531 aa).

The transit peptide at 1–33 directs the protein to the mitochondrion; sequence MAALGCARLRWALRGAGRGLCPHGARAKAAIPA. Lys-283 bears the N6-acetyllysine mark. The interval 384-398 is sterol-binding; it reads PLLKAVLKETLRLYP. Cys-476 lines the heme pocket. N6-acetyllysine is present on residues Lys-509 and Lys-520.

Belongs to the cytochrome P450 family. In terms of assembly, interacts with HSP70; this interaction is required for initial targeting to mitochondria. The cofactor is heme. Expressed in the neural retina and underlying retinal pigment epithelium (at protein level). Expressed in the gray and white matter of cerebellum (at protein level).

It localises to the mitochondrion inner membrane. It carries out the reaction 5beta-cholestane-3alpha,7alpha,12alpha-triol + 6 reduced [adrenodoxin] + 3 O2 + 5 H(+) = (25R)-3alpha,7alpha,12alpha-trihydroxy-5beta-cholestan-26-oate + 6 oxidized [adrenodoxin] + 4 H2O. The catalysed reaction is cholestanol + 2 reduced [adrenodoxin] + O2 + 2 H(+) = (25R)-26-hydroxycholestanol + 2 oxidized [adrenodoxin] + H2O. It catalyses the reaction (25R)-3beta-hydroxycholest-5-en-7-one-26-al + 2 reduced [adrenodoxin] + O2 + H(+) = (25R)-3beta-hydroxycholest-5-en-7-one-26-oate + 2 oxidized [adrenodoxin] + H2O. The enzyme catalyses (25R)-3beta,26-dihydroxycholest-5-en-7-one + 2 reduced [adrenodoxin] + O2 + 2 H(+) = (25R)-3beta-hydroxycholest-5-en-7-one-26-al + 2 oxidized [adrenodoxin] + 2 H2O. It carries out the reaction 7-oxocholesterol + 2 reduced [adrenodoxin] + O2 + 2 H(+) = (25R)-3beta,26-dihydroxycholest-5-en-7-one + 2 oxidized [adrenodoxin] + H2O. The catalysed reaction is calciol + 2 reduced [adrenodoxin] + O2 + 2 H(+) = calcidiol + 2 oxidized [adrenodoxin] + H2O. It catalyses the reaction (25R)-5beta-cholestane-3alpha,7alpha,12alpha,26-tetrol + 2 reduced [adrenodoxin] + O2 + 2 H(+) = (25R)-3alpha,7alpha,12alpha-trihydroxy-5beta-cholestan-26-al + 2 oxidized [adrenodoxin] + 2 H2O. The enzyme catalyses 2 reduced [adrenodoxin] + cholesterol + O2 + 2 H(+) = (25R)-cholest-5-ene-3beta,26-diol + 2 oxidized [adrenodoxin] + H2O. It carries out the reaction (25R)-3beta,4beta-dihydroxycholest-5-en-26-al + 2 reduced [adrenodoxin] + O2 + H(+) = (25R)-3beta,4beta-dihydroxycholest-5-en-26-oate + 2 oxidized [adrenodoxin] + H2O. The catalysed reaction is (25R)-4beta,26-dihydroxycholesterol + 2 reduced [adrenodoxin] + O2 + 2 H(+) = (25R)-3beta,4beta-dihydroxycholest-5-en-26-al + 2 oxidized [adrenodoxin] + 2 H2O. It catalyses the reaction 4beta-hydroxycholesterol + 2 reduced [adrenodoxin] + O2 + 2 H(+) = (25R)-4beta,26-dihydroxycholesterol + 2 oxidized [adrenodoxin] + H2O. The enzyme catalyses (25R)-3beta-hydroxy-5-cholesten-26-al + 2 reduced [adrenodoxin] + O2 + H(+) = (25R)-3beta-hydroxy-5-cholestenoate + 2 oxidized [adrenodoxin] + H2O. It carries out the reaction (25R)-cholest-5-ene-3beta,26-diol + 2 reduced [adrenodoxin] + O2 + 2 H(+) = (25R)-3beta-hydroxy-5-cholesten-26-al + 2 oxidized [adrenodoxin] + 2 H2O. The catalysed reaction is (25R)-3alpha,7alpha,12alpha-trihydroxy-5beta-cholestan-26-al + 2 reduced [adrenodoxin] + O2 + H(+) = (25R)-3alpha,7alpha,12alpha-trihydroxy-5beta-cholestan-26-oate + 2 oxidized [adrenodoxin] + H2O. It catalyses the reaction 5beta-cholestane-3alpha,7alpha,12alpha-triol + 2 reduced [adrenodoxin] + O2 + 2 H(+) = (25R)-5beta-cholestane-3alpha,7alpha,12alpha,26-tetrol + 2 oxidized [adrenodoxin] + H2O. Its pathway is hormone biosynthesis; cholecalciferol biosynthesis. It functions in the pathway steroid metabolism; cholesterol degradation. The protein operates within lipid metabolism; bile acid biosynthesis. In terms of biological role, cytochrome P450 monooxygenase that catalyzes regio- and stereospecific hydroxylation of cholesterol and its derivatives. Hydroxylates (with R stereochemistry) the terminal methyl group of cholesterol side-chain in a three step reaction to yield at first a C26 alcohol, then a C26 aldehyde and finally a C26 acid. Regulates cholesterol homeostasis by catalyzing the conversion of excess cholesterol to bile acids via both the 'neutral' (classic) and the 'acid' (alternative) pathways. May also regulate cholesterol homeostasis via generation of active oxysterols, which act as ligands for NR1H2 and NR1H3 nuclear receptors, modulating the transcription of genes involved in lipid metabolism. Plays a role in cholestanol metabolism in the cerebellum. Similarly to cholesterol, hydroxylates cholestanol and may facilitate sterol diffusion through the blood-brain barrier to the systemic circulation for further degradation. Also hydroxylates retinal 7-ketocholesterol, a noxious oxysterol with pro-inflammatory and pro-apoptotic effects, and may play a role in its elimination from the retinal pigment epithelium. May play a redundant role in vitamin D biosynthesis. Catalyzes 25-hydroxylation of vitamin D3 that is required for its conversion to a functionally active form. The protein is Sterol 26-hydroxylase, mitochondrial of Homo sapiens (Human).